Reading from the N-terminus, the 250-residue chain is Cyclopentanol dehydrogenase (250 aa).

Residues Met18, Asp37, Asp63, Val64, Asn90, Tyr155, Lys159, Ile188, Thr190, and Thr193 each contribute to the NAD(+) site. Tyr155 acts as the Proton acceptor in catalysis.

The protein belongs to the short-chain dehydrogenases/reductases (SDR) family.

The catalysed reaction is cyclopentanol + NAD(+) = cyclopentanone + NADH + H(+). The enzyme catalyses cyclohexanol + NAD(+) = cyclohexanone + NADH + H(+). It participates in alcohol metabolism; cyclopentanol degradation; 5-valerolactone from cyclopentanol: step 1/2. In terms of biological role, catalyzes the oxidation of cyclopentanol to cyclopentanone and cyclohexanol to cyclohexanone. The activity toward cyclohexanol is 60% that of cyclopentanol. This Comamonas sp. (strain NCIMB 9872) protein is Cyclopentanol dehydrogenase.